The primary structure comprises 303 residues: 3-methyl-2-oxobutanoate hydroxymethyltransferase (303 aa).

The span at 1–10 (MDSSGTVRNQ) shows a compositional bias: polar residues. Positions 1–41 (MDSSGTVRNQTSDDHSRPADAAGTAATLYGAPAETRSPRRS) are disordered. Positions 84 and 123 each coordinate Mg(2+). 3-methyl-2-oxobutanoate is bound by residues 84-85 (DS), Asp-123, and Lys-153. Glu-155 contributes to the Mg(2+) binding site. Glu-221 acts as the Proton acceptor in catalysis.

Belongs to the PanB family. Homodecamer; pentamer of dimers. Mg(2+) serves as cofactor.

The protein localises to the cytoplasm. The enzyme catalyses 3-methyl-2-oxobutanoate + (6R)-5,10-methylene-5,6,7,8-tetrahydrofolate + H2O = 2-dehydropantoate + (6S)-5,6,7,8-tetrahydrofolate. Its pathway is cofactor biosynthesis; (R)-pantothenate biosynthesis; (R)-pantoate from 3-methyl-2-oxobutanoate: step 1/2. Functionally, catalyzes the reversible reaction in which hydroxymethyl group from 5,10-methylenetetrahydrofolate is transferred onto alpha-ketoisovalerate to form ketopantoate. This is 3-methyl-2-oxobutanoate hydroxymethyltransferase from Frankia alni (strain DSM 45986 / CECT 9034 / ACN14a).